A 1500-amino-acid chain; its full sequence is Rho GTPase-activating protein 35 (1500 aa).

The has GTPase activity, required for proper localization stretch occupies residues 1–266 (MMMARKQDVR…IPYFEALKQQ (266 aa)). Residues lysine 28, 33–37 (IGKSC), leucine 52, serine 56, 95–97 (EQT), 201–203 (KCD), and 229–231 (SAR) contribute to the GTP site. FF domains lie at 270–327 (IATA…HIHR), 368–422 (KLLE…HLEK), 429–483 (RAEM…HQKQ), and 485–550 (IDKA…HIHF). Tyrosine 308 is modified (phosphotyrosine). The residue at position 589 (serine 589) is a Phosphoserine. Residues 592 to 767 (DPNIDRINLV…LLDSKRNLNL (176 aa)) enclose the pG1 pseudoGTPase domain. A phosphoserine mark is found at serine 770 and serine 773. The 165-residue stretch at 783–947 (RIVMCLMCGD…FKDVVDKKNI (165 aa)) folds into the pG2 pseudoGTPase domain. Phosphoserine is present on residues serine 970, serine 975, serine 985, serine 1002, and serine 1073. The tract at residues 970 to 989 (SPRAGSPLCNSNLQDSEEDI) is disordered. The tract at residues 1058 to 1090 (SYLDQGHRDGQRKSVSSSTWLPPDGFDPSDYAE) is disordered. Tyrosine 1088 carries the post-translational modification Phosphotyrosine. The residue at position 1106 (tyrosine 1106) is a Phosphotyrosine; by ABL2 and PTK6. Residues 1125–1142 (KAQSNGSGNGSDSEMDTS) show a composition bias toward polar residues. The tract at residues 1125 to 1147 (KAQSNGSGNGSDSEMDTSSLERG) is disordered. A phosphoserine mark is found at serine 1135, serine 1143, serine 1151, serine 1177, serine 1180, and serine 1222. A disordered region spans residues 1178-1208 (VGSDDELGPIRKKEEDQASQGYKGDNAVIPY). Positions 1214 to 1237 (PRRRNILRSLRRNTKKPKPKPRPS) are required for phospholipid binding and regulation of the substrate preference. Threonine 1227 is subject to Phosphothreonine. Position 1237 is a phosphoserine (serine 1237). One can recognise a Rho-GAP domain in the interval 1250–1437 (VPLTTVVTPE…LFIQQCPFFF (188 aa)). Positions 1444-1500 (EPPGATPSSPSAVASTVPFLTSTPVTSQPSPPQSPPPTPQSPMQALLPSQLQAEHTL) are disordered. Over residues 1449-1471 (TPSSPSAVASTVPFLTSTPVTSQ) the composition is skewed to low complexity. Over residues 1472–1483 (PSPPQSPPPTPQ) the composition is skewed to pro residues. Residues serine 1473 and serine 1477 each carry the phosphoserine modification. Threonine 1481 carries the post-translational modification Phosphothreonine. Serine 1484 is modified (phosphoserine). Residues 1490–1500 (LPSQLQAEHTL) are compositionally biased toward polar residues.

As to quaternary structure, interacts with RASA1. Interacts with the general transcription factor GTF2I, the interaction sequesters GTF2I in the cytoplasm. Phosphorylation of Tyr-1106 by PTK6 promotes the association with RASA1, inactivating RHOA while activating RAS. Phosphorylation at Tyr-308 by PDGFRA inhibits binding to GTF2I. Phosphorylated by PRKCA at Ser-1222 and Thr-1227, induces relocalization from the cytoplasm to regions of plasma membrane ruffling and prevents the binding and substrate specificity regulation by phospholipids. In brain, phosphorylated by FYN and SRC. During focal adhesion formation, phosphorylated by MAPK1 and MAPK3 at the C-terminal region, probably at Ser-1452, Ser-1477, Thr-1481 and Ser-1484. Phosphorylation by MAPK1 and MAPK3 inhibits GAP function and localizes ARGHAP35 away from newly forming focal adhesions and stress fibers in cells spreading on fibronectin. Phosphorylation at Ser-1477 and Thr-1481 by GSK3B requires priming by MAPK and inhibits RhoGAP activity and modulates polarized cell migration. As to expression, strongly expressed in retina (photoreceptor layer) and brain. Expression is maximal in the occipital, frontal, temporal lobe and also the cerebellum. Medium expression in the medulla and also in kidney, lung, liver, heart and spleen.

The protein localises to the cytoplasm. The protein resides in the cytoskeleton. It is found in the cilium basal body. Its subcellular location is the nucleus. It localises to the cell membrane. Functionally, rho GTPase-activating protein (GAP). Binds several acidic phospholipids which inhibits the Rho GAP activity to promote the Rac GAP activity. This binding is inhibited by phosphorylation by PRKCA. Involved in cell differentiation as well as cell adhesion and migration, plays an important role in retinal tissue morphogenesis, neural tube fusion, midline fusion of the cerebral hemispheres and mammary gland branching morphogenesis. Transduces signals from p21-ras to the nucleus, acting via the ras GTPase-activating protein (GAP). Transduces SRC-dependent signals from cell-surface adhesion molecules, such as laminin, to promote neurite outgrowth. Regulates axon outgrowth, guidance and fasciculation. Modulates Rho GTPase-dependent F-actin polymerization, organization and assembly, is involved in polarized cell migration and in the positive regulation of ciliogenesis and cilia elongation. During mammary gland development, is required in both the epithelial and stromal compartments for ductal outgrowth. Represses transcription of the glucocorticoid receptor by binding to the cis-acting regulatory sequence 5'-GAGAAAAGAAACTGGAGAAACTC-3'; this function is however unclear and would need additional experimental evidences. This Canis lupus familiaris (Dog) protein is Rho GTPase-activating protein 35.